The chain runs to 503 residues: Palmitoleoyl-protein carboxylesterase NOTUM (503 aa).

Positions 1–19 are cleaved as a signal peptide; it reads MGGEVRVLLLLGLLHWVGG. Residues 23 to 53 are disordered; the sequence is RKTWRRRGQQPPQPPPPPPLPQRAEVEPGAG. A compositionally biased stretch (pro residues) spans 33-43; sequence PPQPPPPPPLP. S88 carries the post-translational modification Phosphoserine. N103 carries an N-linked (GlcNAc...) asparagine glycan. Active-site charge relay system residues include S239, D347, and H396.

It belongs to the pectinacetylesterase family. Notum subfamily. Widely expressed. Expressed in lung, ovary, kidney, liver and brain. Not detected in thymus, heart, spleen, stomach, skeletal muscle and bone marrow.

The protein localises to the secreted. It catalyses the reaction [Wnt protein]-O-(9Z)-hexadecenoyl-L-serine + H2O = [Wnt protein]-L-serine + (9Z)-hexadecenoate + H(+). Carboxylesterase that acts as a key negative regulator of the Wnt signaling pathway by specifically mediating depalmitoleoylation of WNT proteins. Serine palmitoleoylation of WNT proteins is required for efficient binding to frizzled receptors. The sequence is that of Palmitoleoyl-protein carboxylesterase NOTUM from Mus musculus (Mouse).